We begin with the raw amino-acid sequence, 374 residues long: Beta sliding clamp (374 aa).

The protein belongs to the beta sliding clamp family. As to quaternary structure, forms a ring-shaped head-to-tail homodimer around DNA which binds and tethers DNA polymerases and other proteins to the DNA. The DNA replisome complex has a single clamp-loading complex (3 tau and 1 each of delta, delta', psi and chi subunits) which binds 3 Pol III cores (1 core on the leading strand and 2 on the lagging strand) each with a beta sliding clamp dimer. Additional proteins in the replisome are other copies of gamma, psi and chi, Ssb, DNA helicase and RNA primase.

It is found in the cytoplasm. Confers DNA tethering and processivity to DNA polymerases and other proteins. Acts as a clamp, forming a ring around DNA (a reaction catalyzed by the clamp-loading complex) which diffuses in an ATP-independent manner freely and bidirectionally along dsDNA. Initially characterized for its ability to contact the catalytic subunit of DNA polymerase III (Pol III), a complex, multichain enzyme responsible for most of the replicative synthesis in bacteria; Pol III exhibits 3'-5' exonuclease proofreading activity. The beta chain is required for initiation of replication as well as for processivity of DNA replication. The sequence is that of Beta sliding clamp (dnaN) from Helicobacter pylori (strain ATCC 700392 / 26695) (Campylobacter pylori).